We begin with the raw amino-acid sequence, 808 residues long: Disks large-associated protein 5 (808 aa).

Phosphoserine is present on residues S66 and S70. The stretch at 88–119 (QRKQLLQKYKEEKQLQKLKEQREKAKRGVFKV) forms a coiled coil. The interval 134–282 (QRGAKAEPEK…QTRETSEMGP (149 aa)) is disordered. Basic and acidic residues-rich tracts occupy residues 135–145 (RGAKAEPEKAF) and 180–193 (QTSE…ERKV). The residue at position 201 (S201) is a Phosphoserine. 2 stretches are compositionally biased toward basic and acidic residues: residues 232-241 (TNEKGSERMR) and 249-278 (KKPE…RETS). At S328 the chain carries Phosphoserine. Residues T337 and T386 each carry the phosphothreonine modification. The disordered stretch occupies residues 377-413 (HVLNQKGASTSDSNHASVKGVPCSEGSEGQTSQPPHD). Residues 382-392 (KGASTSDSNHA) are compositionally biased toward polar residues. At S598 the chain carries Phosphoserine. S607 carries the phosphoserine; by AURKA modification. S612 bears the Phosphoserine mark. T617 is modified (phosphothreonine). S620 is modified (phosphoserine). Residues 629–654 (RAAGDLLRQKMPLKKPDPQSSKSEHV) are disordered. The span at 642–654 (KKPDPQSSKSEHV) shows a compositional bias: basic and acidic residues. At T728 the chain carries Phosphothreonine. Positions 735 to 757 (SNPETNTSSQSNTSQEEAEASQS) are disordered. S743 is modified (phosphoserine). At S797 the chain carries Phosphoserine; by AURKA. Phosphoserine is present on S806.

This sequence belongs to the SAPAP family. As to quaternary structure, interacts with CDC2. Interacts with the C-terminal proline-rich region of FBXO7. Recruited by FBXO7 to a SCF (SKP1-CUL1-F-box) protein complex in a CDC2/Cyclin B-phosphorylation dependent manner. Interacts with CDH1. In terms of processing, ubiquitinated, leading to its degradation. Post-translationally, decreased phosphorylation levels are associated with the differentiation of intestinal epithelial cells. Expressed at low levels in normal resting liver. Up-regulated in regenerating liver after partial hepatectomy.

It is found in the nucleus. The protein resides in the cytoplasm. Its subcellular location is the cytoskeleton. The protein localises to the spindle. Functionally, potential cell cycle regulator that may play a role in carcinogenesis of cancer cells. Mitotic phosphoprotein regulated by the ubiquitin-proteasome pathway. Key regulator of adherens junction integrity and differentiation that may be involved in CDH1-mediated adhesion and signaling in epithelial cells. The chain is Disks large-associated protein 5 (Dlgap5) from Mus musculus (Mouse).